Consider the following 1171-residue polypeptide: WD repeat-containing protein on Y chromosome (1171 aa).

8 WD repeats span residues 157–201, 331–370, 374–413, 464–503, 516–555, 603–643, 748–787, and 831–870; these read EIPE…LRSA, RIPL…EPSA, GHNG…LLQT, THAA…RKII, IIDI…VVRN, FHTD…RRYN, KVGD…IPQA, and GHLK…LGTL. Positions 1076–1171 are disordered; that stretch reads RTSFTLSDYT…TNTMKSSNSH (96 aa). Composition is skewed to polar residues over residues 1094-1106 and 1161-1171; these read SSRN…SSGS and KTNTMKSSNSH.

This chain is WD repeat-containing protein on Y chromosome, found in Drosophila grimshawi (Hawaiian fruit fly).